We begin with the raw amino-acid sequence, 2193 residues long: Genome polyprotein (2193 aa).

The interval 1–22 (MGSQVSTQRSGSHENSNSASEG) is disordered. Glycine 2 carries N-myristoyl glycine; by host lipidation. Topologically, residues 2–1503 (GSQVSTQRSG…HLNRAVLIMQ (1502 aa)) are cytoplasmic. Amphipathic alpha-helix regions lie at residues 566-588 (GDGIADMIDQAVTSRVGRALTSL) and 568-588 (GIADMIDQAVTSRVGRALTSL). Catalysis depends on for protease 2A activity residues histidine 883 and aspartate 901. Positions 918 and 920 each coordinate Zn(2+). The active-site For protease 2A activity is cysteine 972. The Zn(2+) site is built by cysteine 978 and histidine 980. The interval 1112–1184 (SASWLKKFND…EQSAASQEDL (73 aa)) is membrane-binding. The tract at residues 1112-1250 (SASWLKKFND…SPGTGKSLAT (139 aa)) is oligomerization. Residues 1133 to 1137 (SNKIS) form an RNA-binding region. An SF3 helicase domain is found at 1216-1374 (EKRMNNYMQF…YKTDLGRLDA (159 aa)). ATP is bound at residue 1240–1247 (GSPGTGKS). 3 residues coordinate Zn(2+): cysteine 1381, cysteine 1392, and cysteine 1397. The segment at 1381 to 1397 (CSENNTANFKRCSPLVC) adopts a C4-type; degenerate zinc-finger fold. The segment at 1424 to 1431 (EYNNRYAI) is RNA-binding. The oligomerization stretch occupies residues 1435–1440 (IEALFQ). An intramembrane segment occupies 1504–1519 (SIATVVAVVSLVYVIY). The Cytoplasmic segment spans residues 1520 to 2193 (KLFAGFQGAY…NLRRNWLELF (674 aa)). Tyrosine 1529 is modified (O-(5'-phospho-RNA)-tyrosine). One can recognise a Peptidase C3 domain in the interval 1549–1727 (GPSLDFALSL…FCAGLKRSYF (179 aa)). Active-site for protease 3C activity residues include histidine 1588, glutamate 1619, and cysteine 1695. Residues 1958-2073 (GSLFAFDYSG…ASYPFPIDCL (116 aa)) enclose the RdRp catalytic domain. The Mg(2+) site is built by aspartate 1964 and aspartate 2060.

The protein belongs to the picornaviruses polyprotein family. In terms of assembly, interacts with capsid protein VP1 and capsid protein VP3 to form heterotrimeric protomers. As to quaternary structure, interacts with capsid protein VP0, and capsid protein VP3 to form heterotrimeric protomers. Five protomers subsequently associate to form pentamers which serve as building blocks for the capsid. Interacts with capsid protein VP2, capsid protein VP3 and capsid protein VP4 following cleavage of capsid protein VP0. Interacts with capsid protein VP1 and capsid protein VP3 in the mature capsid. In terms of assembly, interacts with capsid protein VP0 and capsid protein VP1 to form heterotrimeric protomers. Five protomers subsequently associate to form pentamers which serve as building blocks for the capsid. Interacts with capsid protein VP4 in the mature capsid. Interacts with protein 2C; this interaction may be important for virion morphogenesis. As to quaternary structure, interacts with capsid protein VP1 and capsid protein VP3. Homodimer. In terms of assembly, homohexamer; forms a hexameric ring structure with 6-fold symmetry characteristic of AAA+ ATPases. Interacts (via N-terminus) with host RTN3 (via reticulon domain); this interaction is important for viral replication. Interacts with capsid protein VP3; this interaction may be important for virion morphogenesis. As to quaternary structure, interacts with protein 3CD. Homodimer. Interacts with host GBF1. Interacts (via GOLD domain) with host ACBD3 (via GOLD domain); this interaction allows the formation of a viral protein 3A/ACBD3 heterotetramer with a 2:2 stoichiometry, which will stimulate the recruitment of host PI4KB in order to synthesize PI4P at the viral RNA replication sites. In terms of assembly, interacts with RNA-directed RNA polymerase. As to quaternary structure, interacts with host IFIH1/MDA5; this interaction inhibits host IFIH1. Interacts with protein 3AB and with RNA-directed RNA polymerase. In terms of assembly, interacts with Viral protein genome-linked and with protein 3CD. Mg(2+) is required as a cofactor. In terms of processing, specific enzymatic cleavages in vivo by the viral proteases yield processing intermediates and the mature proteins. Post-translationally, myristoylation is required for the formation of pentamers during virus assembly. Further assembly of 12 pentamers and a molecule of genomic RNA generates the provirion. During virion maturation, immature virions are rendered infectious following cleavage of VP0 into VP4 and VP2. This maturation seems to be an autocatalytic event triggered by the presence of RNA in the capsid and it is followed by a conformational change infectious virion. In terms of processing, myristoylation is required during RNA encapsidation and formation of the mature virus particle. Post-translationally, VPg is uridylylated by the polymerase into VPg-pUpU. This acts as a nucleotide-peptide primer for the genomic RNA replication.

It localises to the virion. It is found in the host cytoplasm. Its subcellular location is the host cytoplasmic vesicle membrane. The protein localises to the host nucleus. The enzyme catalyses a ribonucleoside 5'-triphosphate + H2O = a ribonucleoside 5'-diphosphate + phosphate + H(+). It catalyses the reaction Selective cleavage of Tyr-|-Gly bond in the picornavirus polyprotein.. The catalysed reaction is RNA(n) + a ribonucleoside 5'-triphosphate = RNA(n+1) + diphosphate. It carries out the reaction Selective cleavage of Gln-|-Gly bond in the poliovirus polyprotein. In other picornavirus reactions Glu may be substituted for Gln, and Ser or Thr for Gly.. With respect to regulation, replication or transcription is subject to high level of random mutations by the nucleotide analog ribavirin. Its function is as follows. Forms an icosahedral capsid of pseudo T=3 symmetry with capsid proteins VP2 and VP3. The capsid is 300 Angstroms in diameter, composed of 60 copies of each capsid protein and enclosing the viral positive strand RNA genome. Capsid protein VP1 mainly forms the vertices of the capsid. Capsid protein VP1 interacts with host cell receptor to provide virion attachment to target host cells. This attachment induces virion internalization. After binding to its receptor, the capsid undergoes conformational changes. Capsid protein VP1 N-terminus (that contains an amphipathic alpha-helix) and capsid protein VP4 are externalized. Together, they shape a pore in the host membrane through which viral genome is translocated to host cell cytoplasm. In terms of biological role, forms an icosahedral capsid of pseudo T=3 symmetry with capsid proteins VP2 and VP3. The capsid is 300 Angstroms in diameter, composed of 60 copies of each capsid protein and enclosing the viral positive strand RNA genome. Functionally, lies on the inner surface of the capsid shell. After binding to the host receptor, the capsid undergoes conformational changes. Capsid protein VP4 is released, Capsid protein VP1 N-terminus is externalized, and together, they shape a pore in the host membrane through which the viral genome is translocated into the host cell cytoplasm. Component of immature procapsids, which is cleaved into capsid proteins VP4 and VP2 after maturation. Allows the capsid to remain inactive before the maturation step. Its function is as follows. Cysteine protease that cleaves viral polyprotein and specific host proteins. It is responsible for the autocatalytic cleavage between the P1 and P2 regions, which is the first cleavage occurring in the polyprotein. Also cleaves the host translation initiation factor EIF4G1, in order to shut down the capped cellular mRNA translation. Inhibits the host nucleus-cytoplasm protein and RNA trafficking by cleaving host members of the nuclear pores. Counteracts stress granule formation probably by antagonizing its assembly or promoting its dissassembly. Cleaves and inhibits host IFIH1/MDA5, thereby inhibiting the type-I IFN production and the establishment of the antiviral state. Cleaves and inhibits host MAVS, thereby inhibiting the type-I IFN production and the establishment of the antiviral state. In terms of biological role, plays an essential role in the virus replication cycle by acting as a viroporin. Creates a pore in the host endoplasmic reticulum and as a consequence releases Ca2+ in the cytoplasm of infected cell. In turn, high levels of cytoplasmic calcium may trigger membrane trafficking and transport of viral ER-associated proteins to viroplasms, sites of viral genome replication. Functionally, induces and associates with structural rearrangements of intracellular membranes. Displays RNA-binding, nucleotide binding and NTPase activities. May play a role in virion morphogenesis and viral RNA encapsidation by interacting with the capsid protein VP3. Localizes the viral replication complex to the surface of membranous vesicles. Together with protein 3CD binds the Cis-Active RNA Element (CRE) which is involved in RNA synthesis initiation. Acts as a cofactor to stimulate the activity of 3D polymerase, maybe through a nucleid acid chaperone activity. Its function is as follows. Localizes the viral replication complex to the surface of membranous vesicles. It inhibits host cell endoplasmic reticulum-to-Golgi apparatus transport and causes the disassembly of the Golgi complex, possibly through GBF1 interaction. This would result in depletion of MHC, trail receptors and IFN receptors at the host cell surface. Plays an essential role in viral RNA replication by recruiting ACBD3 and PI4KB at the viral replication sites, thereby allowing the formation of the rearranged membranous structures where viral replication takes place. In terms of biological role, acts as a primer for viral RNA replication and remains covalently bound to viral genomic RNA. VPg is uridylylated prior to priming replication into VPg-pUpU. The oriI viral genomic sequence may act as a template for this. The VPg-pUpU is then used as primer on the genomic RNA poly(A) by the RNA-dependent RNA polymerase to replicate the viral genome. During genome replication, the VPg-RNA linkage is removed by the host TDP2, thereby accelerating replication. During the late stage of the replication cycle, host TDP2 is excluded from sites of viral RNA synthesis and encapsidation, allowing for the generation of progeny virions. Functionally, involved in the viral replication complex and viral polypeptide maturation. It exhibits protease activity with a specificity and catalytic efficiency that is different from protease 3C. Protein 3CD lacks polymerase activity. Protein 3CD binds to the 5'UTR of the viral genome. Major viral protease that mediates proteolytic processing of the polyprotein. Cleaves host EIF5B, contributing to host translation shutoff. Also cleaves host PABPC1, contributing to host translation shutoff. Binds and inhibits host IFIH1/MDA5, thereby inhibiting the type-I IFN production and the establishment of the antiviral state. Cleaves host MAP3K7/TAK1, resulting in inhibition of TRAF6-triggered NF-kappa-B induction. Cleaves host NLRP1, triggers host N-glycine-mediated degradation of the autoinhibitory NLRP1 N-terminal fragment. Its function is as follows. Replicates the viral genomic RNA on the surface of intracellular membranes. May form linear arrays of subunits that propagate along a strong head-to-tail interaction called interface-I. Covalently attaches UMP to a tyrosine of VPg, which is used to prime RNA synthesis. The positive stranded RNA genome is first replicated at virus induced membranous vesicles, creating a dsRNA genomic replication form. This dsRNA is then used as template to synthesize positive stranded RNA genomes. ss(+)RNA genomes are either translated, replicated or encapsidated. The sequence is that of Genome polyprotein from Homo sapiens (Human).